Consider the following 691-residue polypeptide: Histone-lysine N-methyltransferase Set8 (691 aa).

Disordered stretches follow at residues 1–22 (MIMV…AAAA), 211–234 (RSGL…SATT), 345–381 (PAAG…GDGG), 422–450 (SRRR…QPTN), and 484–516 (APAK…ATNG). Residues 220–232 (SSHSSSSSGGASA) are compositionally biased toward low complexity. Pro residues predominate over residues 431-446 (PQAPYQPQQPQPPPGT). Positions 484-503 (APAKPRAALTKGSKTKTGSK) are enriched in low complexity. The 122-residue stretch at 555–676 (EGLQVRNFMG…PGEELTYDYG (122 aa)) folds into the SET domain. Residues 565 to 567 (KGR), Tyr610, and 637 to 638 (NH) each bind S-adenosyl-L-methionine.

Belongs to the class V-like SAM-binding methyltransferase superfamily. Histone-lysine methyltransferase family. PR/SET subfamily.

It is found in the nucleus. The protein resides in the chromosome. The catalysed reaction is L-lysyl(20)-[histone H4] + S-adenosyl-L-methionine = N(6)-methyl-L-lysyl(20)-[histone H4] + S-adenosyl-L-homocysteine + H(+). Functionally, histone methyltransferase that specifically monomethylates 'Lys-20' of histone H4. H4 'Lys-20' monomethylation is enriched during mitosis and represents a specific tag for epigenetic transcriptional repression. Mainly functions in euchromatin regions, thereby playing a central role in the silencing of euchromatic genes. Required for cell proliferation, possibly by contributing to the maintenance of proper higher-order structure of DNA and chromosome condensation during mitosis. The sequence is that of Histone-lysine N-methyltransferase Set8 from Drosophila pseudoobscura pseudoobscura (Fruit fly).